The chain runs to 331 residues: Methionyl-tRNA formyltransferase (331 aa).

(6S)-5,6,7,8-tetrahydrofolate is bound at residue 111 to 114; sequence SLLP.

Belongs to the Fmt family.

It catalyses the reaction L-methionyl-tRNA(fMet) + (6R)-10-formyltetrahydrofolate = N-formyl-L-methionyl-tRNA(fMet) + (6S)-5,6,7,8-tetrahydrofolate + H(+). Attaches a formyl group to the free amino group of methionyl-tRNA(fMet). The formyl group appears to play a dual role in the initiator identity of N-formylmethionyl-tRNA by promoting its recognition by IF2 and preventing the misappropriation of this tRNA by the elongation apparatus. The polypeptide is Methionyl-tRNA formyltransferase (Thermosynechococcus vestitus (strain NIES-2133 / IAM M-273 / BP-1)).